The following is a 161-amino-acid chain: uncharacterized protein (161 aa).

The next 2 helical transmembrane spans lie at 13–35 (VAAV…PHAN) and 40–62 (VFSA…PFIS).

The protein localises to the cell membrane. This is an uncharacterized protein from Archaeoglobus fulgidus (strain ATCC 49558 / DSM 4304 / JCM 9628 / NBRC 100126 / VC-16).